A 212-amino-acid chain; its full sequence is Root-specific lectin (212 aa).

A signal peptide spans 1 to 26 (MKMMSTRALALGAAAVLAFAAATAHA). Residue Gln-27 is modified to Pyrrolidone carboxylic acid. 4 Chitin-binding type-1 domains span residues 27–68 (QRCG…ACYT), 69–111 (SKRC…PCRA), 112–154 (DIKC…ACST), and 155–197 (DKPC…GCDG). 16 cysteine pairs are disulfide-bonded: Cys-29–Cys-44, Cys-38–Cys-50, Cys-43–Cys-57, Cys-61–Cys-66, Cys-72–Cys-87, Cys-81–Cys-93, Cys-86–Cys-100, Cys-104–Cys-109, Cys-115–Cys-130, Cys-124–Cys-136, Cys-129–Cys-143, Cys-147–Cys-152, Cys-158–Cys-173, Cys-167–Cys-179, Cys-172–Cys-186, and Cys-190–Cys-195. Substrate is bound at residue 36 to 38 (MEC). 88-99 (SQWGYCGFGAEY) is a binding site for substrate. 140-141 (SE) serves as a coordination point for substrate. Asn-206 carries an N-linked (GlcNAc...) asparagine glycan.

In roots.

Functionally, carbohydrate binding. The chain is Root-specific lectin from Hordeum vulgare (Barley).